The following is a 2364-amino-acid chain: Cytotoxin-L (2364 aa).

Positions 1–91 are four-helical bundle; it reads MSLVNKAQLQ…EVLELKNNSL (91 aa). In terms of domain architecture, GT44 spans 96 to 468; the sequence is KNLHFIWIGG…APDVRSTINL (373 aa). The segment at 96-468 is glucosyltransferase region; the sequence is KNLHFIWIGG…APDVRSTINL (373 aa). Residues 101 to 103, asparagine 139, 265 to 270, and 286 to 288 each bind UDP-alpha-D-glucose; these read IWI, LAAASD, and DVD. Aspartate 288, glutamate 515, and serine 518 together coordinate Mg(2+). 518-520 is a binding site for UDP-alpha-D-glucose; it reads SLW. An autoprocessing region region spans residues 544 to 799; sequence GEDDILDFSQ…KSKNLHELST (256 aa). Positions 545 and 546 each coordinate Zn(2+). In terms of domain architecture, Peptidase C80 spans 567 to 774; that stretch reads SSSMRTPNKE…EESIIKDISS (208 aa). Positions 577, 600, and 647 each coordinate 1D-myo-inositol hexakisphosphate. Histidine 653 provides a ligand contact to Zn(2+). Histidine 653 (for protease activity) is an active-site residue. Cysteine 698 acts as the Nucleophile; for protease activity in catalysis. Histidine 757 contributes to the Zn(2+) binding site. Positions 764, 775, and 792 each coordinate 1D-myo-inositol hexakisphosphate. Positions 800-1500 are translocation region; sequence LLQEIKNNSN…ESIIRNIYMP (701 aa). Interaction with host SEMA6A and SEMA6B stretches follow at residues 1433 to 1438, 1466 to 1471, 1484 to 1495, 1504 to 1511, and 1596 to 1601; these read CIKLIE, DNETKY, FTAEFSNESIIR, NLFIYSSK, and YNNLDP. Cell wall-binding repeat units follow at residues 1833–1852, 1854–1873, 1876–1895, 1926–1945, 1946–1965, 1967–1986, 1987–2006, 2007–2026, 2057–2076, 2077–2097, 2099–2118, 2119–2138, 2139–2158, 2209–2224, 2227–2249, 2250–2269, 2270–2289, 2320–2339, and 2340–2359; these read VSGL…PKNN, ITGF…TKSG, SIGE…QGIL, FIGK…NYRA, AVEW…KTGE, LKGL…NGIM, QTGF…DGVM, QVGY…NGER, YNGI…SNTA, VVGW…NTAE, CIGL…NGIR, QLGF…SGKI, ELGY…SGLV, ETGW…YFDP, KKAY…NGIM, KTGL…DGKM, QFGY…DGKM, YTGW…EYIA, and ATSS…DTAE. Residues 1835–2364 form a receptor-binding (CROPS) region region; it reads GLIYINDSLY…PDTAELVVSE (530 aa).

The protein belongs to the clostridial glucosylating toxin (LCGT) family. Homomultimer; forms an inactive homomultimer at pH 8, which dissociates at pH 4, leading to cytotoxicity. Interacts with host SEMA6A; interaction promotes toxin entry into host cell. Interacts with host SEMA6B; interaction promotes toxin entry into host cell. The cofactor is Zn(2+). It depends on Mn(2+) as a cofactor. Mg(2+) serves as cofactor. Undergoes autocatalytic cleavage to release the N-terminal part (Glucosyltransferase TcsL), which constitutes the active part of the toxin, in the host cytosol. 1D-myo-inositol hexakisphosphate-binding (InsP6) activates the peptidase C80 domain and promotes autoprocessing.

Its subcellular location is the secreted. It is found in the host endosome membrane. The protein localises to the host cytoplasm. It localises to the host cytosol. The protein resides in the host cell membrane. It carries out the reaction L-threonyl-[protein] + UDP-alpha-D-glucose = 3-O-(alpha-D-glucosyl)-L-threonyl-[protein] + UDP + H(+). Its activity is regulated as follows. Protease activity is activated upon binding to 1D-myo-inositol hexakisphosphate (InsP6), which induces conformational reorganization. Its function is as follows. Precursor of a cytotoxin that targets the vascular endothelium, inducing an anti-inflammatory effect and resulting in lethal toxic shock syndrome. TcsL constitutes the main toxin that mediates the pathology of P.sordellii infection, an anaerobic Gram-positive bacterium found in soil and in the gastrointestinal and vaginal tracts of animals and humans; although the majority of carriers are asymptomatic, pathogenic P.sordellii infections arise rapidly and are highly lethal. This form constitutes the precursor of the toxin: it enters into host cells and mediates autoprocessing to release the active toxin (Glucosyltransferase TcsL) into the host cytosol. Targets vascular endothelium by binding to the semaphorin proteins SEMA6A and SEMA6B, and enters host cells via clathrin-mediated endocytosis. Once entered into host cells, acidification in the endosome promotes the membrane insertion of the translocation region and formation of a pore, leading to translocation of the GT44 and peptidase C80 domains across the endosomal membrane. This activates the peptidase C80 domain and autocatalytic processing, releasing the N-terminal part (Glucosyltransferase TcsL), which constitutes the active part of the toxin, in the cytosol. Active form of the toxin, which is released into the host cytosol following autoprocessing and inactivates small GTPases. Acts by mediating monoglucosylation of small GTPases of the Ras (H-Ras/HRAS, K-Ras/KRAS and N-Ras/NRAS) family in host cells at the conserved threonine residue located in the switch I region ('Thr-37/35'), using UDP-alpha-D-glucose as the sugar donor. Does not catalyze monoglucosylation of Ral/RALA. Also able to catalyze monoglucosylation of some members of the Rho family (Rac1 and Rap2A), but with less efficiency than with Ras proteins. Monoglucosylation of host small GTPases completely prevents the recognition of the downstream effector, blocking the GTPases in their inactive form and leading to apoptosis. Induces an anti-inflammatory effect, mainly by inactivating Ras proteins which results in blockage of the cell cycle and killing of immune cells. The absence or moderate local inflammatory response allows C.sordellii spreading in deep tissues, production of toxin which is released in the general circulation and causes a toxic shock syndrome. This chain is Cytotoxin-L, found in Paraclostridium sordellii (Clostridium sordellii).